Here is a 188-residue protein sequence, read N- to C-terminus: dCTP deaminase (188 aa).

Lys-109 to Arg-114 contributes to the dCTP binding site. The active-site Proton donor/acceptor is the Glu-135. Residues Gln-154, Tyr-168, and Gln-178 each coordinate dCTP.

The protein belongs to the dCTP deaminase family. In terms of assembly, homotrimer.

The catalysed reaction is dCTP + H2O + H(+) = dUTP + NH4(+). It functions in the pathway pyrimidine metabolism; dUMP biosynthesis; dUMP from dCTP (dUTP route): step 1/2. Catalyzes the deamination of dCTP to dUTP. The polypeptide is dCTP deaminase (Helicobacter pylori (strain G27)).